Reading from the N-terminus, the 543-residue chain is Formin-binding protein 1-like (543 aa).

In terms of domain architecture, F-BAR spans 1–263 (MSWGTELWDQ…AAKSVDERRD (263 aa)). 2 coiled-coil regions span residues 66–258 (FTSC…AKSV) and 334–426 (LEDF…QRSE). The REM-1 domain maps to 339–416 (HLPPEQRRKR…IHKNEGWLSE (78 aa)). The segment at 424–467 (RSERRHSAEANHLVAQGRESPEGSYTEDANQEGRVQPQHHAHPE) is disordered. The SH3 domain occupies 479-540 (PAIGHCKSLY…PTSYIEITLE (62 aa)).

This sequence belongs to the FNBP1 family. Homodimerizes, the dimers can polymerize end-to-end to form filamentous structures. Interacts with GTP-bound cdc42 and wasl/n-wasp.

Its subcellular location is the cytoplasm. It is found in the cytoskeleton. The protein resides in the cell cortex. The protein localises to the cytoplasmic vesicle. It localises to the cell membrane. Functionally, required to coordinate membrane tubulation with reorganization of the actin cytoskeleton during endocytosis. Essential for autophagy of intracellular bacterial pathogens. Promotes cdc42-induced actin polymerization by activating the wasl-waspip complex, the predominant form of wasl/n-wasp in cells. This chain is Formin-binding protein 1-like (fnbp1l), found in Xenopus laevis (African clawed frog).